A 238-amino-acid polypeptide reads, in one-letter code: MSHKLTILPFLIKFTPKFPQSIDHDEHGLNVYAFDLDHTIIKPKSPNISFSRSASDWQFINFNSKKSTLDYLCNIIDNDPTAVIVIFSNQGGVITVPRTSKSCTKYTNKILLFLKAIKNDERGETLSHRLWLYAAPKRPKTFAANHSKITFASLGESYNNDPNIFEKVRKPMTGMVEFFKRDLESAYRVSEQISPIKLNWIYYCGDAAGRKKDFSDSDIKFAENLHVEFKYPEEIFHG.

The protein belongs to the DNA 3' phosphatase family.

The protein localises to the nucleus. The enzyme catalyses a 3'end (2'-deoxyribonucleotide 3'-phosphate)-DNA + H2O = a 3'-end 2'-deoxyribonucleotide-DNA + phosphate. Its function is as follows. Dephosphorylate DNA's 3'-phosphate termini. Has a role in the repair of breaks in single-stranded DNA. The polypeptide is Polynucleotide 3'-phosphatase (TPP1) (Saccharomyces cerevisiae (strain ATCC 204508 / S288c) (Baker's yeast)).